A 406-amino-acid polypeptide reads, in one-letter code: Heparan sulfate glucosamine 3-O-sulfotransferase 3A1 (406 aa).

Over 1 to 24 the chain is Cytoplasmic; it reads MAPPGPASALSTSAEPLSRSIFRK. A helical; Signal-anchor for type II membrane protein membrane pass occupies residues 25–43; that stretch reads FLLMLCSLLTSLYVFYCLA. The Lumenal portion of the chain corresponds to 44–406; it reads ERCQTLSGPV…MTGHDFGWDG (363 aa). Residues 92 to 102 are compositionally biased toward basic residues; that stretch reads QLPQWRRRRPP. The disordered stretch occupies residues 92–134; sequence QLPQWRRRRPPAPRDDGEEAAWEEESPGLSGGPGGSGAGSTVA. Residues 107–117 are compositionally biased toward acidic residues; the sequence is DGEEAAWEEES. The span at 120 to 129 shows a compositional bias: gly residues; sequence LSGGPGGSGA. 162–166 lines the 3'-phosphoadenylyl sulfate pocket; it reads KGGTR. Substrate-binding positions include Arg-166, 184 to 190, and 215 to 218; these read EPHFFDR and KTPS. Positions 243 and 251 each coordinate 3'-phosphoadenylyl sulfate. 255-259 serves as a coordination point for substrate; the sequence is QTLSK. Asn-273 carries an N-linked (GlcNAc...) asparagine glycan. A substrate-binding site is contributed by 283–284; that stretch reads WS. An N-linked (GlcNAc...) asparagine glycan is attached at Asn-344. A disulfide bridge links Cys-351 with Cys-363. 367–370 serves as a coordination point for substrate; sequence TKGR. 3'-phosphoadenylyl sulfate is bound at residue 368 to 372; the sequence is KGRTH.

This sequence belongs to the sulfotransferase 1 family. As to expression, ubiquitous. Most abundant in heart and placenta, followed by liver and kidney.

It is found in the golgi apparatus membrane. It catalyses the reaction alpha-D-glucosaminyl-[heparan sulfate](n) + 3'-phosphoadenylyl sulfate = 3-sulfo-alpha-D-glucosaminyl-[heparan sulfate](n) + adenosine 3',5'-bisphosphate + H(+). Sulfotransferase that utilizes 3'-phospho-5'-adenylyl sulfate (PAPS) to catalyze the transfer of a sulfo group to an N-unsubstituted glucosamine linked to a 2-O-sulfo iduronic acid unit on heparan sulfate. Catalyzes the O-sulfation of glucosamine in IdoUA2S-GlcNS and also in IdoUA2S-GlcNH2. The substrate-specific O-sulfation generates an enzyme-modified heparan sulfate which acts as a binding receptor to Herpes simplex virus-1 (HSV-1) and permits its entry. Unlike HS3ST1/3-OST-1, does not convert non-anticoagulant heparan sulfate to anticoagulant heparan sulfate. The protein is Heparan sulfate glucosamine 3-O-sulfotransferase 3A1 (HS3ST3A1) of Homo sapiens (Human).